Here is a 555-residue protein sequence, read N- to C-terminus: Genome polyprotein (555 aa).

Residues 1–7 (KHAQRIE) lie on the Extracellular side of the membrane. A helical membrane pass occupies residues 8-28 (TWILRHPGFTIMAAILAYTIG). Topologically, residues 29–34 (TTHFQR) are cytoplasmic. The chain crosses the membrane as a helical span at residues 35 to 49 (ALIFILLTAVAPSMT). The Extracellular portion of the chain corresponds to 50–494 (MRCIGISNRD…LHQVFGAIYG (445 aa)). 4 disulfides stabilise this stretch: cysteine 52/cysteine 79, cysteine 109/cysteine 170, cysteine 123/cysteine 154, and cysteine 141/cysteine 165. Asparagine 116 is a glycosylation site (N-linked (GlcNAc...) asparagine; by host). A fusion peptide region spans residues 147-160 (DRGWGNGCGLFGKG). Asparagine 202 carries N-linked (GlcNAc...) asparagine; by host glycosylation. 2 cysteine pairs are disulfide-bonded: cysteine 234–cysteine 334 and cysteine 351–cysteine 382. Residues 495 to 515 (AAFSGVSWTMKILIGVIITWI) traverse the membrane as a helical segment. The Cytoplasmic portion of the chain corresponds to 516–521 (GMNSRS). Residues 522–542 (TSLSVSLVLVGIVTLYLEVMV) form a helical membrane-spanning segment. Residues 543–555 (QADSGCVVSWKNK) lie on the Extracellular side of the membrane.

Homodimer; in the endoplasmic reticulum and Golgi. Interacts with protein prM. Interacts with non-structural protein 1. As to quaternary structure, homodimer; Homohexamer when secreted. Interacts with envelope protein E. In terms of processing, N-glycosylated. N-glycosylated. The excreted form is glycosylated and this is required for efficient secretion of the protein from infected cells. Post-translationally, specific enzymatic cleavages in vivo yield mature proteins. Cleavages in the lumen of endoplasmic reticulum are performed by host signal peptidase, wereas cleavages in the cytoplasmic side are performed by serine protease NS3. Signal cleavage at the 2K-4B site requires a prior NS3 protease-mediated cleavage at the 4A-2K site.

Its subcellular location is the virion membrane. It localises to the host endoplasmic reticulum membrane. The protein localises to the secreted. Its function is as follows. May play a role in virus budding. Exerts cytotoxic effects by activating a mitochondrial apoptotic pathway through M ectodomain. May display a viroporin activity. Binds to host cell surface receptor and mediates fusion between viral and cellular membranes. Envelope protein is synthesized in the endoplasmic reticulum in the form of heterodimer with protein prM. They play a role in virion budding in the ER, and the newly formed immature particle is covered with 60 spikes composed of heterodimer between precursor prM and envelope protein E. The virion is transported to the Golgi apparatus where the low pH causes dissociation of PrM-E heterodimers and formation of E homodimers. prM-E cleavage is inefficient, and many virions are only partially matured. These uncleaved prM would play a role in immune evasion. In terms of biological role, involved in immune evasion, pathogenesis and viral replication. Once cleaved off the polyprotein, is targeted to three destinations: the viral replication cycle, the plasma membrane and the extracellular compartment. Essential for viral replication. Required for formation of the replication complex and recruitment of other non-structural proteins to the ER-derived membrane structures. Excreted as a hexameric lipoparticle that plays a role against host immune response. Antagonizing the complement function. Binds to the host macrophages and dendritic cells. Inhibits signal transduction originating from Toll-like receptor 3 (TLR3). Functionally, disrupts the host endothelial glycocalyx layer of host pulmonary microvascular endothelial cells, inducing degradation of sialic acid and shedding of heparan sulfate proteoglycans. NS1 induces expression of sialidases, heparanase, and activates cathepsin L, which activates heparanase via enzymatic cleavage. These effects are probably linked to the endothelial hyperpermeability observed in severe dengue disease. This is Genome polyprotein from Dengue virus type 2 (strain Thailand/TH-36/1958) (DENV-2).